The chain runs to 176 residues: Ribosome maturation factor RimM (176 aa).

The region spanning 100-173 is the PRC barrel domain; sequence KDEYHYHDLI…WLLINPPPGL (74 aa).

Belongs to the RimM family. In terms of assembly, binds ribosomal protein uS19.

The protein resides in the cytoplasm. Functionally, an accessory protein needed during the final step in the assembly of 30S ribosomal subunit, possibly for assembly of the head region. Essential for efficient processing of 16S rRNA. May be needed both before and after RbfA during the maturation of 16S rRNA. It has affinity for free ribosomal 30S subunits but not for 70S ribosomes. The chain is Ribosome maturation factor RimM from Prochlorococcus marinus (strain NATL1A).